Consider the following 1333-residue polypeptide: MLDVNVFDELRIGLATADDIRRWSKGEVKKPETINYRTLKPEKDGLFCERIFGPTRDWECACGKYKRVRYKGIICERCGVEVTKSKVRRERMGHIELAAPVTHIWYFKGVPSRLGYLLDLAPKDLDLIIYFGANIITSVDEEARHSDQTTLEAEMLLEKKDVEADAESDIAERAEKLEEDLAELEAAGAKADARRKVQAAADKEMQHIRERAQREIDRLDEVWQTFIKLAPKQMIRDEKLYDELIDRYEDYFTGGMGAESIEALIQNFDLDAEAEELRDIINNGKGQKKMRALKRLKVVAAFQRSGNDPAGMVLNAIPVIPPELRPMVQLDGGRFATSDLNDLYRRVINRNNRLKRMIELGAPEIIVNNEKRMLQESVDALFDNGRRGRPVTGPGNRPLKSLSDLLKGKQGRFRQNLLGKRVDYSGRSVIIVGPQLRLHECGLPKLMALELFKPFVMKRLVENEYAQNIKSAKRMVERQRPEVWDVLEEAISEHPVMLNRAPTLHRLGIQAFEPVLVEGKAIQLHPLACEAFNADFDGDQMAVHLPLSAEAQAEARVLMLASNNILSPASGKPLAMPRLDMVTGLYYLTLEKSSEEFGGQGAYQPADENGPEKGVYSSLAEAIMAYDRGVLGLQAPVRIRLNHLRPPAEVEAEQFPDGWNQGETWLAHTTLGRVMFNEILPWNYPYLEGIMVRKGGGSDKIMLGDVVNDLAAKYPMITVAQTMDKMKDAGFYWSTRSGVTIAMSDVLVLPNKEEMLDRYEESARQIEVKYNRGKLTGRERYDRLVELWKDATDEVGQAVEDLYPDDNPIPMIVKSGAAGNMRQIWTLAGMKGMVVNSKGDYITRPIKTSFREGLTVLEYFNNSHGSRKGLADTALRTADSGYLTRRLVDVAQDVIVRVEDCGTRQGVRVPVAAEVLDATGAVTGYTRHDLIETSVSGRVLAGDATNAAGEVVLAAGTDLTELNIDLLVEAGIKDVKVRSVLTCQTPTGVCAKCYGKSMASGQQVDIGEAVGIVAAQSIGEPGTQLTMRTFHQGGVGGDITGGLPRVQELFEARVPKNCAPIASVEGVIHLEDEGNFYTLTIVPDDGSDNVVYEKLSKRQGLASTRVAMESNAGAFIERTLTEGDRVTVGQRLLRGAADPHDVLEILGRRGVEQHLIDEVQAVYRAQGVAIHDKHIEIIIRQMLRRGTVIESGSTEFLPGSLVDLSEAKLANSEAIGAGGQPAELRSEIMGITKASLATESWLSAASFQETTRVLTDAAINKRSDKLIGLKENVIIGKLIPAGTGISRYRNISIKPTEAARNAAYSIPTYGESIYGDDGFGEFTGASVPLDEAF.

Zn(2+) is bound by residues Cys-60, Cys-62, Cys-75, and Cys-78. Mg(2+) contacts are provided by Asp-535, Asp-537, and Asp-539. The Zn(2+) site is built by Cys-901, Cys-983, Cys-990, and Cys-993.

It belongs to the RNA polymerase beta' chain family. As to quaternary structure, the RNAP catalytic core consists of 2 alpha, 1 beta, 1 beta' and 1 omega subunit. When a sigma factor is associated with the core the holoenzyme is formed, which can initiate transcription. Mg(2+) serves as cofactor. The cofactor is Zn(2+).

The enzyme catalyses RNA(n) + a ribonucleoside 5'-triphosphate = RNA(n+1) + diphosphate. In terms of biological role, DNA-dependent RNA polymerase catalyzes the transcription of DNA into RNA using the four ribonucleoside triphosphates as substrates. The chain is DNA-directed RNA polymerase subunit beta' from Corynebacterium glutamicum (strain R).